The chain runs to 369 residues: Cytokine receptor common subunit gamma (369 aa).

The signal sequence occupies residues 1–22 (MLKLLLSPRSFLVLQLLLLRAG). Residues 23 to 263 (WSSKVLMSSA…ENPSLFALEA (241 aa)) lie on the Extracellular side of the membrane. Cysteine 62 and cysteine 72 are disulfide-bonded. Residues asparagine 71, asparagine 75, asparagine 84, and asparagine 96 are each glycosylated (N-linked (GlcNAc...) asparagine). The cysteines at positions 102 and 115 are disulfide-linked. Residues 156–254 (APENLTLSNL…VHWGSHTVEE (99 aa)) enclose the Fibronectin type-III domain. N-linked (GlcNAc...) asparagine glycosylation is found at asparagine 159 and asparagine 164. A WSXWS motif motif is present at residues 238–242 (WSKWS). Residues 264 to 284 (VLIPVGTMGLIITLIFVYCWL) traverse the membrane as a helical segment. At 285–369 (ERMPPIPPIK…PPCYSLKPEA (85 aa)) the chain is on the cytoplasmic side. The Box 1 motif motif lies at 286 to 294 (RMPPIPPIK).

It belongs to the type I cytokine receptor family. Type 5 subfamily. The gamma subunit is common to the IL2, IL4, IL7, IL15, IL21 and probably also the IL13 receptors. Interacts with SHB upon interleukin stimulation. Interacts with IL9.

It is found in the cell membrane. Its subcellular location is the cell surface. Functionally, common subunit for the receptors for a variety of interleukins. Probably in association with IL15RA, involved in the stimulation of neutrophil phagocytosis by IL15. This chain is Cytokine receptor common subunit gamma (Il2rg), found in Mus musculus (Mouse).